The primary structure comprises 211 residues: MMSGEYGDFNNTNNKELSLLDKLKKAWINEKYAPNLLNYEDVIIKEVMEKIEEKESLCASAISNINLQFTANIYEMEIERLKYIIKCYLVQRIKKIDKFYSSILLEIENDEYDSYKLLSEFEINYCQKYKALMDGYFKNTLLNSIPKDFQKMDSNSINRPFLNTFVFCKPREDLGDFLVDDETIDFKKTSIYFLKYLPIKSLVEGGKMDLI.

The protein belongs to the GINS4/SLD5 family. Component of the GINS complex which is a heterotetramer of gins1, gins2, gins3 and gins4.

The protein resides in the nucleus. Its function is as follows. The GINS complex plays an essential role in the initiation of DNA replication. The chain is DNA replication complex GINS protein SLD5 (gins4) from Dictyostelium discoideum (Social amoeba).